We begin with the raw amino-acid sequence, 807 residues long: Phenylalanine--tRNA ligase beta subunit (807 aa).

Positions 39 to 156 constitute a tRNA-binding domain; sequence AGEFSGVVIG…SDAPLGQCVR (118 aa). The region spanning 409 to 488 is the B5 domain; the sequence is PQTKDVNLRR…RIFGYNNIPN (80 aa). 4 residues coordinate Mg(2+): D466, D472, E475, and E476. One can recognise an FDX-ACB domain in the interval 713–806; that stretch reads SRFPANRRDL…LKTELNASLR (94 aa).

It belongs to the phenylalanyl-tRNA synthetase beta subunit family. Type 1 subfamily. As to quaternary structure, tetramer of two alpha and two beta subunits. Mg(2+) serves as cofactor.

The protein localises to the cytoplasm. The enzyme catalyses tRNA(Phe) + L-phenylalanine + ATP = L-phenylalanyl-tRNA(Phe) + AMP + diphosphate + H(+). The sequence is that of Phenylalanine--tRNA ligase beta subunit from Colwellia psychrerythraea (strain 34H / ATCC BAA-681) (Vibrio psychroerythus).